The primary structure comprises 65 residues: UPF0434 protein BQ10150 (65 aa).

This sequence belongs to the UPF0434 family.

The polypeptide is UPF0434 protein BQ10150 (Bartonella quintana (strain Toulouse) (Rochalimaea quintana)).